We begin with the raw amino-acid sequence, 578 residues long: Suppressor of smlA (578 aa).

Involved in regulation of group size of aggregation streams. The chain is Suppressor of smlA (sslA1) from Dictyostelium discoideum (Social amoeba).